Here is a 227-residue protein sequence, read N- to C-terminus: MAYPMQLGFQDATSPIMEELLHFHDHTLMIVFLISSLVLYIISLMLTTKLTHTSTMDAQEVETIWTILPAIILILIALPSLRILYMMDEINNPSLTVKTMGHQWYWSYEYTDYEDLSFDSYMIPTSELKPGELRLLEVDNRVVLPMEMTIRMLISSEDVLHSWTVPSLGLKTDAIPGRLNQTTLMSTRPGLYYGQCSEICGSNHSFMPIVLELVPLKYFEKWSASML.

The Mitochondrial intermembrane portion of the chain corresponds to 1-14; it reads MAYPMQLGFQDATS. The helical transmembrane segment at 15-45 threads the bilayer; sequence PIMEELLHFHDHTLMIVFLISSLVLYIISLM. The Mitochondrial matrix segment spans residues 46–59; sequence LTTKLTHTSTMDAQ. A helical transmembrane segment spans residues 60–87; sequence EVETIWTILPAIILILIALPSLRILYMM. Residues 88–227 are Mitochondrial intermembrane-facing; the sequence is DEINNPSLTV…YFEKWSASML (140 aa). Cu cation contacts are provided by His-161, Cys-196, Glu-198, Cys-200, His-204, and Met-207. Mg(2+) is bound at residue Glu-198. A Phosphotyrosine modification is found at Tyr-218.

This sequence belongs to the cytochrome c oxidase subunit 2 family. In terms of assembly, component of the cytochrome c oxidase (complex IV, CIV), a multisubunit enzyme composed of 14 subunits. The complex is composed of a catalytic core of 3 subunits MT-CO1, MT-CO2 and MT-CO3, encoded in the mitochondrial DNA, and 11 supernumerary subunits COX4I, COX5A, COX5B, COX6A, COX6B, COX6C, COX7A, COX7B, COX7C, COX8 and NDUFA4, which are encoded in the nuclear genome. The complex exists as a monomer or a dimer and forms supercomplexes (SCs) in the inner mitochondrial membrane with NADH-ubiquinone oxidoreductase (complex I, CI) and ubiquinol-cytochrome c oxidoreductase (cytochrome b-c1 complex, complex III, CIII), resulting in different assemblies (supercomplex SCI(1)III(2)IV(1) and megacomplex MCI(2)III(2)IV(2)). Found in a complex with TMEM177, COA6, COX18, COX20, SCO1 and SCO2. Interacts with TMEM177 in a COX20-dependent manner. Interacts with COX20. Interacts with COX16. Requires Cu cation as cofactor.

The protein localises to the mitochondrion inner membrane. It carries out the reaction 4 Fe(II)-[cytochrome c] + O2 + 8 H(+)(in) = 4 Fe(III)-[cytochrome c] + 2 H2O + 4 H(+)(out). Component of the cytochrome c oxidase, the last enzyme in the mitochondrial electron transport chain which drives oxidative phosphorylation. The respiratory chain contains 3 multisubunit complexes succinate dehydrogenase (complex II, CII), ubiquinol-cytochrome c oxidoreductase (cytochrome b-c1 complex, complex III, CIII) and cytochrome c oxidase (complex IV, CIV), that cooperate to transfer electrons derived from NADH and succinate to molecular oxygen, creating an electrochemical gradient over the inner membrane that drives transmembrane transport and the ATP synthase. Cytochrome c oxidase is the component of the respiratory chain that catalyzes the reduction of oxygen to water. Electrons originating from reduced cytochrome c in the intermembrane space (IMS) are transferred via the dinuclear copper A center (CU(A)) of subunit 2 and heme A of subunit 1 to the active site in subunit 1, a binuclear center (BNC) formed by heme A3 and copper B (CU(B)). The BNC reduces molecular oxygen to 2 water molecules using 4 electrons from cytochrome c in the IMS and 4 protons from the mitochondrial matrix. This Boselaphus tragocamelus (Nilgai) protein is Cytochrome c oxidase subunit 2 (MT-CO2).